A 161-amino-acid polypeptide reads, in one-letter code: Phosphopantetheine adenylyltransferase (161 aa).

Ser9 lines the substrate pocket. ATP is bound by residues 9–10 (SF) and His17. Residues Lys41, Thr73, and Arg87 each coordinate substrate. ATP contacts are provided by residues 88-90 (GLR), Glu98, and 123-129 (FAHISST).

It belongs to the bacterial CoaD family. Homohexamer. The cofactor is Mg(2+).

Its subcellular location is the cytoplasm. The catalysed reaction is (R)-4'-phosphopantetheine + ATP + H(+) = 3'-dephospho-CoA + diphosphate. The protein operates within cofactor biosynthesis; coenzyme A biosynthesis; CoA from (R)-pantothenate: step 4/5. Reversibly transfers an adenylyl group from ATP to 4'-phosphopantetheine, yielding dephospho-CoA (dPCoA) and pyrophosphate. The protein is Phosphopantetheine adenylyltransferase of Chloroflexus aurantiacus (strain ATCC 29366 / DSM 635 / J-10-fl).